The chain runs to 272 residues: ATP synthase subunit a (272 aa).

A run of 7 helical transmembrane segments spans residues 39 to 59 (GFWA…LIFI), 103 to 123 (VAPL…LKWI), 124 to 144 (PVDY…KIVP), 152 to 172 (FGIS…VKGV), 181 to 201 (FTPF…IIGL), 221 to 241 (VVFI…NVPW), and 242 to 262 (AIFH…LTVV).

This sequence belongs to the ATPase A chain family. In terms of assembly, F-type ATPases have 2 components, CF(1) - the catalytic core - and CF(0) - the membrane proton channel. CF(1) has five subunits: alpha(3), beta(3), gamma(1), delta(1), epsilon(1). CF(0) has three main subunits: a(1), b(2) and c(9-12). The alpha and beta chains form an alternating ring which encloses part of the gamma chain. CF(1) is attached to CF(0) by a central stalk formed by the gamma and epsilon chains, while a peripheral stalk is formed by the delta and b chains.

Its subcellular location is the cell inner membrane. In terms of biological role, key component of the proton channel; it plays a direct role in the translocation of protons across the membrane. The polypeptide is ATP synthase subunit a (Ectopseudomonas mendocina (strain ymp) (Pseudomonas mendocina)).